Here is a 154-residue protein sequence, read N- to C-terminus: MKFLCILLLASLAATSLAILNEPEDETHLEAQPTDASAQFIISNLQISTEDLSKEPSISREDLISKEPNVIRSPRQPQNQNPKLPLSILKEKQLRNATLGSEETTEHAPSDASTTEGKLMELGHKIMKNLENTVKEIIKYLKSLFPPASEVVKP.

Positions 1–18 are cleaved as a signal peptide; sequence MKFLCILLLASLAATSLA. O-linked (GalNAc...) threonine; partial glycosylation is present at Thr34. Phosphoserine occurs at positions 48, 53, 57, 59, and 65. Positions 51–65 are enriched in basic and acidic residues; that stretch reads DLSKEPSISREDLIS. Positions 51–115 are disordered; that stretch reads DLSKEPSISR…EHAPSDASTT (65 aa). Asn96 is a glycosylation site (N-linked (GlcNAc...) asparagine).

Belongs to the PP3/GlyCAM-1 family. In terms of tissue distribution, highly and specifically expressed in the lactating mammary gland.

It is found in the membrane. The chain is Glycosylation-dependent cell adhesion molecule 1 (GLYCAM1) from Capra hircus (Goat).